The chain runs to 84 residues: uncharacterized protein (84 aa).

Residues 1-83 enclose the LITAF domain; the sequence is MDDKFTTLPC…CKQAVFVYKI (83 aa). Zn(2+) is bound by residues Cys21 and Cys24. Positions 39 to 61 are membrane-binding amphipathic helix; the sequence is MSWVVCTAITLACLPCCCIPFLC. Zn(2+) contacts are provided by Cys71 and Cys74.

It is found in the host membrane. This is an uncharacterized protein from Dryophytes versicolor (chameleon treefrog).